The primary structure comprises 390 residues: DNA polymerase IV (390 aa).

The region spanning 6–187 is the UmuC domain; sequence VMHVDLDAFF…LDIAVMPGIG (182 aa). Residues Asp10 and Asp105 each coordinate Mg(2+). Glu106 is a catalytic residue.

It belongs to the DNA polymerase type-Y family. In terms of assembly, monomer. Requires Mg(2+) as cofactor.

It is found in the cytoplasm. The enzyme catalyses DNA(n) + a 2'-deoxyribonucleoside 5'-triphosphate = DNA(n+1) + diphosphate. Functionally, poorly processive, error-prone DNA polymerase involved in untargeted mutagenesis. Copies undamaged DNA at stalled replication forks, which arise in vivo from mismatched or misaligned primer ends. These misaligned primers can be extended by PolIV. Exhibits no 3'-5' exonuclease (proofreading) activity. May be involved in translesional synthesis, in conjunction with the beta clamp from PolIII. This Dehalococcoides mccartyi (strain CBDB1) protein is DNA polymerase IV.